The sequence spans 120 residues: NAD(P)H-quinone oxidoreductase subunit 3, chloroplastic (120 aa).

3 helical membrane passes run 9–29 (IFWAFLIISSVIPILAFLISG), 64–84 (MFALVFVVFDVETVFLYPWAM), and 88–108 (VLGVSVFIEALIFVLILIVGL).

This sequence belongs to the complex I subunit 3 family. NDH is composed of at least 16 different subunits, 5 of which are encoded in the nucleus.

The protein resides in the plastid. The protein localises to the chloroplast thylakoid membrane. The enzyme catalyses a plastoquinone + NADH + (n+1) H(+)(in) = a plastoquinol + NAD(+) + n H(+)(out). It catalyses the reaction a plastoquinone + NADPH + (n+1) H(+)(in) = a plastoquinol + NADP(+) + n H(+)(out). Functionally, NDH shuttles electrons from NAD(P)H:plastoquinone, via FMN and iron-sulfur (Fe-S) centers, to quinones in the photosynthetic chain and possibly in a chloroplast respiratory chain. The immediate electron acceptor for the enzyme in this species is believed to be plastoquinone. Couples the redox reaction to proton translocation, and thus conserves the redox energy in a proton gradient. The sequence is that of NAD(P)H-quinone oxidoreductase subunit 3, chloroplastic from Populus alba (White poplar).